The sequence spans 88 residues: Small ribosomal subunit protein uS17 (88 aa).

It belongs to the universal ribosomal protein uS17 family. Part of the 30S ribosomal subunit.

Functionally, one of the primary rRNA binding proteins, it binds specifically to the 5'-end of 16S ribosomal RNA. This is Small ribosomal subunit protein uS17 from Maridesulfovibrio salexigens (strain ATCC 14822 / DSM 2638 / NCIMB 8403 / VKM B-1763) (Desulfovibrio salexigens).